The following is a 369-amino-acid chain: Olfactory receptor 2T1 (369 aa).

Residues 1 to 76 (MWQEYYFLNV…LFNRKETSGL (76 aa)) lie on the Extracellular side of the membrane. The N-linked (GlcNAc...) asparagine glycan is linked to Asn56. A helical membrane pass occupies residues 77–97 (IFAIISIIFFTALMANGVMIF). The Cytoplasmic segment spans residues 98 to 107 (LIQTDLRLHT). Residues 108-128 (PMYFLLSHLSLIDMMYISTIV) traverse the membrane as a helical segment. The Extracellular segment spans residues 129–148 (PKMLVNYLLDQRTISFVGCT). A disulfide bridge connects residues Cys147 and Cys239. Residues 149-169 (AQHFLYLTLVGAEFFLLGLMA) form a helical membrane-spanning segment. The Cytoplasmic portion of the chain corresponds to 170–191 (YDRYVAICNPLRYPVLMSRRVC). A helical transmembrane segment spans residues 192-212 (WMIIAGSWFGGSLDGFLLTPI). Residues 213–247 (TMSFPFCNSREINHFFCEAPAVLKLACADTALYET) lie on the Extracellular side of the membrane. Residues 248–268 (VMYVCCVLMLLIPFSVVLASY) traverse the membrane as a helical segment. Topologically, residues 269–286 (ARILTTVQCMSSVEGRKK) are cytoplasmic. The helical transmembrane segment at 287-307 (AFATCSSHMTVVSLFYGAAMY) threads the bilayer. Residues 308 to 321 (TYMLPHSYHKPAQD) are Extracellular-facing. Residues 322–342 (KVLSVFYTILTPMLNPLIYSL) form a helical membrane-spanning segment. Topologically, residues 343-369 (RNKDVTGALKRALGRFKGPQRVSGGVF) are cytoplasmic.

Belongs to the G-protein coupled receptor 1 family.

It localises to the cell membrane. Functionally, odorant receptor. This is Olfactory receptor 2T1 (OR2T1) from Homo sapiens (Human).